A 75-amino-acid chain; its full sequence is Neuropeptide-like protein 31 (75 aa).

A signal peptide spans 1–22 (MISTSSILVLVVLLACFMAANA). Tyrosine amide occurs at positions 29, 39, 49, 56, and 64. Position 73 is a tryptophan amide (Trp-73).

The protein belongs to the YARP (YGGW-amide related peptide) family. In terms of tissue distribution, expressed in hypoderm.

The protein resides in the secreted. Functionally, antimicrobial peptides that have antifungal activity against D.coniospora. Has weak antibacterial activity against Gram-positive bacteria M.luteus and Gram-negative E.coli. In Caenorhabditis elegans, this protein is Neuropeptide-like protein 31 (nlp-31).